Here is a 366-residue protein sequence, read N- to C-terminus: Protein FAM131A (366 aa).

Residues 342–366 (QRQASDLASSGVVSLDEDEAEPEEQ) form a disordered region. Positions 356–366 (LDEDEAEPEEQ) are enriched in acidic residues.

The protein belongs to the FAM131 family.

This Homo sapiens (Human) protein is Protein FAM131A (FAM131A).